The primary structure comprises 518 residues: Histone deacetylase 1 (518 aa).

Positions 22–333 (RRVCYFYDAE…WCYETGVALG (312 aa)) are histone deacetylase. Histidine 153 acts as the Proton donor/acceptor in catalysis. Aspartate 188, histidine 190, and aspartate 276 together coordinate Zn(2+). The disordered stretch occupies residues 387-518 (HAPSVQFQER…QDQPSVHQKT (132 aa)). A compositionally biased stretch (acidic residues) spans 401–412 (ELPEQDEDQEDP). The span at 413-435 (DERHHADSDVEMDDVKPLDDSGR) shows a compositional bias: basic and acidic residues. Polar residues predominate over residues 503-518 (DNSNKLQDQPSVHQKT).

This sequence belongs to the histone deacetylase family. HD Type 1 subfamily. As to quaternary structure, interacts with TPR3. Zn(2+) is required as a cofactor. Expressed in roots and leaves.

It localises to the nucleus. It catalyses the reaction N(6)-acetyl-L-lysyl-[histone] + H2O = L-lysyl-[histone] + acetate. Functionally, responsible for the deacetylation of lysine residues on the N-terminal part of the core histones (H2A, H2B, H3 and H4). Histone deacetylation gives a tag for epigenetic repression and plays an important role in transcriptional regulation, cell cycle progression and developmental events. Histone deacetylases act via the formation of large multiprotein complexes. Negatively regulates the expression of the NAC48/NAC6 gene that controls root growth in seedlings. Epigenetically represses the expression of NAC48/NAC6 by deacetylating 'Lys-9' (H3K9ac), 'Lys-14' (H3K14ac) and 'Lys-18' (H3K18ac) of histone H3, and 'Lys-5' (H4K5ac), 'Lys-12' (H4K12ac) and 'Lys-16' (H4K16ac) of histone H4. Functions in the regulation of gene expression in the whole genome. Acts as a chromatin remodeling regulator to promote the formation of a repressive chromatin state. Functions with MODD via its interaction with TPR3, to down-regulates the histone acetylation level at BZIP46 target genes. BZIP46 is a positive regulator of abscisic acid (ABA) signaling and drought stress tolerance. This is Histone deacetylase 1 from Oryza sativa subsp. japonica (Rice).